We begin with the raw amino-acid sequence, 103 residues long: Large ribosomal subunit protein bL21 (103 aa).

It belongs to the bacterial ribosomal protein bL21 family. In terms of assembly, part of the 50S ribosomal subunit. Contacts protein L20.

This protein binds to 23S rRNA in the presence of protein L20. This is Large ribosomal subunit protein bL21 from Teredinibacter turnerae (strain ATCC 39867 / T7901).